The chain runs to 127 residues: uncharacterized protein (127 aa).

4 helical membrane passes run Met1 to Val21, Thr32 to Phe52, Ala68 to Val88, and Ile100 to Lys120.

It belongs to the GtrA family.

It localises to the cell membrane. This is an uncharacterized protein from Bacillus subtilis (strain 168).